Consider the following 1239-residue polypeptide: Anillin (1239 aa).

Disordered regions lie at residues 32–67 (CSVPSSSATSASGGDAGVLAPRSRSPGGQSAASGGG), 230–265 (EAPPPKPHLSSRRAEKGPAPLPPKKDEVDEASRTKQ), 493–621 (FDNQ…MCNG), and 684–716 (GSTQDDQSDSGDEQNASRLSLGSKGTTASNSFS). The span at 53-63 (RSRSPGGQSAA) shows a compositional bias: low complexity. Residues 126–371 (EQAEGGALNP…ENKGTGGQSQ (246 aa)) form an interaction with and bundling of F-actin region. The segment covering 252 to 265 (PKKDEVDEASRTKQ) has biased composition (basic and acidic residues). The segment covering 500–518 (SSVAAQARPPAPAPSRVVR) has biased composition (low complexity). A compositionally biased stretch (pro residues) spans 519–528 (PMPPPPPPPI). The span at 551–563 (EDSKRARKSHSDR) shows a compositional bias: basic and acidic residues. Residues 594–610 (DEEETESCMDESDDQSQ) are compositionally biased toward acidic residues. Positions 699–716 (ASRLSLGSKGTTASNSFS) are enriched in polar residues. Position 712 is a phosphoserine (S712). T740 is modified (phosphothreonine). Phosphoserine is present on residues S744 and S754. T831 carries the post-translational modification Phosphothreonine. The stretch at 834 to 861 (DDEEMQNAREVNDASQAQDKIKKLLSEV) forms a coiled coil. One can recognise a PH domain in the interval 1106-1230 (SVEYKGFLTM…WCAYLNKALT (125 aa)).

In terms of assembly, interacts with and bundles F-actin. In terms of tissue distribution, accumulates in the ring canals that interconnect cells of the germline cysts in males and the ovarian follicles in females. These structures develop from arrested contractile rings after a specialized cytokinesis in which the closing of the invaginating plasma membrane is incomplete. Also concentrates in the arrested cleavage furrows that initially link the oocyte to its 15 nurse cells in the early egg chamber and is subsequently lost from these furrows as germline cell division is completed.

It localises to the nucleus. Its subcellular location is the cytoplasm. The protein localises to the cytoskeleton. The protein resides in the cell cortex. It is found in the cell projection. It localises to the cilium. Its subcellular location is the flagellum. Functionally, required for cytokinesis. Essential for the structural integrity of the cleavage furrow and for completion of cleavage furrow ingression and proper formation of the midbody. Required during cellularization of syncytial embryos for the proper formation and function of the furrow canals, the stable inward folds of the plasma membrane which separate the peripheral nuclei. Also required for the formation of the pole cells, the progenitors of the adult germline which are formed by cytokinesis of the cytoplasmic buds at the posterior pole of the syncytial embryo. Essential for embryonic viability. The polypeptide is Anillin (scra) (Drosophila melanogaster (Fruit fly)).